The primary structure comprises 211 residues: Putative ankyrin repeat protein R810 (211 aa).

ANK repeat units follow at residues 31 to 61 (TKFI…NLKY), 72 to 101 (NIND…DICA), 103 to 131 (QNSP…KFFG), 133 to 162 (YSSA…FCLE), and 163 to 191 (MEIA…SYFD).

This is Putative ankyrin repeat protein R810 from Acanthamoeba polyphaga mimivirus (APMV).